Consider the following 177-residue polypeptide: MEICRGLRSHLITLLLFLFHSETICRPSGRKSSKMQAFRIWDVNQKTFYLRNNQLVAGYLQGPNVNLEEKIDVVPIEPHALFLGIHGGKMCLSCVKSGDETRLQLEAVNITDLSENRKQDKRFAFIRSDSGPTTSFESAACPGWFLCTAMEADQPVSLTNMPDEGVMVTKFYFQEDE.

The N-terminal stretch at 1-25 (MEICRGLRSHLITLLLFLFHSETIC) is a signal peptide. Cysteine 91 and cysteine 141 are oxidised to a cystine. Asparagine 109 is a glycosylation site (N-linked (GlcNAc...) asparagine).

It belongs to the IL-1 family. In terms of tissue distribution, the intracellular form of IL1RN is predominantly expressed in epithelial cells.

The protein resides in the secreted. It localises to the cytoplasm. In terms of biological role, anti-inflammatory antagonist of interleukin-1 family of proinflammatory cytokines such as interleukin-1beta/IL1B and interleukin-1alpha/IL1A. Protects from immune dysregulation and uncontrolled systemic inflammation triggered by IL1 for a range of innate stimulatory agents such as pathogens. This chain is Interleukin-1 receptor antagonist protein (IL1RN), found in Homo sapiens (Human).